The primary structure comprises 140 residues: Ribosomal RNA large subunit methyltransferase H (140 aa).

S-adenosyl-L-methionine-binding positions include leucine 58, glycine 90, and 108-113; that span reads LSLLTF.

Belongs to the RNA methyltransferase RlmH family. Homodimer.

The protein localises to the cytoplasm. It carries out the reaction pseudouridine(1915) in 23S rRNA + S-adenosyl-L-methionine = N(3)-methylpseudouridine(1915) in 23S rRNA + S-adenosyl-L-homocysteine + H(+). In terms of biological role, specifically methylates the pseudouridine at position 1915 (m3Psi1915) in 23S rRNA. This is Ribosomal RNA large subunit methyltransferase H from Protochlamydia amoebophila (strain UWE25).